The primary structure comprises 193 residues: 7-methyl-GTP pyrophosphatase (193 aa).

Asp70 serves as the catalytic Proton acceptor.

This sequence belongs to the Maf family. YceF subfamily. A divalent metal cation serves as cofactor.

The protein resides in the cytoplasm. It catalyses the reaction N(7)-methyl-GTP + H2O = N(7)-methyl-GMP + diphosphate + H(+). Its function is as follows. Nucleoside triphosphate pyrophosphatase that hydrolyzes 7-methyl-GTP (m(7)GTP). May have a dual role in cell division arrest and in preventing the incorporation of modified nucleotides into cellular nucleic acids. In Vibrio cholerae serotype O1 (strain ATCC 39315 / El Tor Inaba N16961), this protein is 7-methyl-GTP pyrophosphatase.